The chain runs to 230 residues: Cytidylate kinase (230 aa).

13 to 21 contacts ATP; it reads GPAGTGKSS.

Belongs to the cytidylate kinase family. Type 1 subfamily.

Its subcellular location is the cytoplasm. The enzyme catalyses CMP + ATP = CDP + ADP. It carries out the reaction dCMP + ATP = dCDP + ADP. In Mycobacterium tuberculosis (strain ATCC 25177 / H37Ra), this protein is Cytidylate kinase.